The primary structure comprises 609 residues: Large ribosomal subunit assembly factor BipA (609 aa).

Residues 3 to 198 (QNIRNIAIIA…AIIKYAPAPN (196 aa)) enclose the tr-type G domain. GTP is bound by residues 15-20 (DHGKTT) and 128-131 (NKID).

This sequence belongs to the TRAFAC class translation factor GTPase superfamily. Classic translation factor GTPase family. BipA subfamily. Monomer.

The protein localises to the cytoplasm. The catalysed reaction is GTP + H2O = GDP + phosphate + H(+). Its function is as follows. A 50S ribosomal subunit assembly protein with GTPase activity, required for 50S subunit assembly at low temperatures, may also play a role in translation. Binds GTP and analogs. Binds the 70S ribosome between the 30S and 50S subunits, in a similar position as ribosome-bound EF-G; it contacts a number of ribosomal proteins, both rRNAs and the A-site tRNA. This chain is Large ribosomal subunit assembly factor BipA, found in Buchnera aphidicola subsp. Schizaphis graminum (strain Sg).